A 332-amino-acid polypeptide reads, in one-letter code: MARILDNNVMGNEEFSDRTLRPQYLHEYIGQDKVKEQFAIFIEAAKRRDESLDHVLLFGPPGLGKTTMAFVIANELGVNLKQTSGPAVEKAGDLVAILNELEPGDILFIDEIHRMPMSVEEVLYSAMEDFYIDIMIGAGDTSRSIHLDLPPFTLIGATTRAGMLSNPLRARFGITGHMEYYQEKDLTEIVERTATIFEIKIDHEAARKLACRSRGTPRIANRLLKRVRDYAQIIGDGIITAQITDRALTMLDVDREGLDYIDQKILRTMIEMYQGGPVGLGTLSVNIAEERNTVEEMYEPYLIQKGFLMRTRTGRVATQKAYRHLGYPYQNT.

A large ATPase domain (RuvB-L) region spans residues Met1 to Tyr181. ATP is bound by residues Leu20, Arg21, Gly62, Lys65, Thr66, Thr67, Glu128 to Phe130, Arg171, Tyr181, and Arg218. Thr66 is a Mg(2+) binding site. The segment at Gln182 to Asp252 is small ATPAse domain (RuvB-S). Positions Arg255 to Thr332 are head domain (RuvB-H). DNA-binding residues include Arg291, Arg310, Arg312, and Arg315.

The protein belongs to the RuvB family. In terms of assembly, homohexamer. Forms an RuvA(8)-RuvB(12)-Holliday junction (HJ) complex. HJ DNA is sandwiched between 2 RuvA tetramers; dsDNA enters through RuvA and exits via RuvB. An RuvB hexamer assembles on each DNA strand where it exits the tetramer. Each RuvB hexamer is contacted by two RuvA subunits (via domain III) on 2 adjacent RuvB subunits; this complex drives branch migration. In the full resolvosome a probable DNA-RuvA(4)-RuvB(12)-RuvC(2) complex forms which resolves the HJ.

The protein resides in the cytoplasm. It catalyses the reaction ATP + H2O = ADP + phosphate + H(+). Functionally, the RuvA-RuvB-RuvC complex processes Holliday junction (HJ) DNA during genetic recombination and DNA repair, while the RuvA-RuvB complex plays an important role in the rescue of blocked DNA replication forks via replication fork reversal (RFR). RuvA specifically binds to HJ cruciform DNA, conferring on it an open structure. The RuvB hexamer acts as an ATP-dependent pump, pulling dsDNA into and through the RuvAB complex. RuvB forms 2 homohexamers on either side of HJ DNA bound by 1 or 2 RuvA tetramers; 4 subunits per hexamer contact DNA at a time. Coordinated motions by a converter formed by DNA-disengaged RuvB subunits stimulates ATP hydrolysis and nucleotide exchange. Immobilization of the converter enables RuvB to convert the ATP-contained energy into a lever motion, pulling 2 nucleotides of DNA out of the RuvA tetramer per ATP hydrolyzed, thus driving DNA branch migration. The RuvB motors rotate together with the DNA substrate, which together with the progressing nucleotide cycle form the mechanistic basis for DNA recombination by continuous HJ branch migration. Branch migration allows RuvC to scan DNA until it finds its consensus sequence, where it cleaves and resolves cruciform DNA. This chain is Holliday junction branch migration complex subunit RuvB, found in Streptococcus pyogenes serotype M1.